We begin with the raw amino-acid sequence, 186 residues long: UPF0669 protein C6orf120 homolog (186 aa).

A signal peptide spans 1–19 (MVPFWAGLLVLSALPQTLG). A glycan (N-linked (GlcNAc...) asparagine) is linked at Asn-47. The segment at 141–165 (KNSYSSDETPGQPRQSQGPEDTEEE) is disordered. A compositionally biased stretch (polar residues) spans 142 to 159 (NSYSSDETPGQPRQSQGP).

The protein belongs to the UPF0669 family.

The protein resides in the secreted. This is UPF0669 protein C6orf120 homolog from Danio rerio (Zebrafish).